A 519-amino-acid chain; its full sequence is Probable DNA ligase (519 aa).

Glutamate 221 is an ATP binding site. Lysine 223 serves as the catalytic N6-AMP-lysine intermediate. Positions 228, 243, 272, 312, 384, and 390 each coordinate ATP.

The protein belongs to the ATP-dependent DNA ligase family. The cofactor is Mg(2+).

It carries out the reaction ATP + (deoxyribonucleotide)n-3'-hydroxyl + 5'-phospho-(deoxyribonucleotide)m = (deoxyribonucleotide)n+m + AMP + diphosphate.. Its function is as follows. DNA ligase that seals nicks in double-stranded DNA during DNA replication, DNA recombination and DNA repair. The chain is Probable DNA ligase from Mycolicibacterium paratuberculosis (strain ATCC BAA-968 / K-10) (Mycobacterium paratuberculosis).